Consider the following 62-residue polypeptide: Sperm protamine P1 (62 aa).

The segment at 1-62 (MARYRRHSRS…RYSRRGRRRY (62 aa)) is disordered.

The protein belongs to the protamine P1 family. In terms of tissue distribution, testis.

It is found in the nucleus. The protein resides in the chromosome. Functionally, protamines substitute for histones in the chromatin of sperm during the haploid phase of spermatogenesis. They compact sperm DNA into a highly condensed, stable and inactive complex. The polypeptide is Sperm protamine P1 (PRM1) (Neophascogale lorentzii (Long-clawed marsupial mouse)).